The following is a 214-amino-acid chain: Sugar transporter SWEET1 (214 aa).

7 helical membrane passes run 3-23, 38-58, 65-85, 93-113, 125-145, 157-177, and 181-201; these read WMWLLSGACIVFTLGMFSSGL, IQFLPFLTTDLNNLGWFYYGY, LIIVNLIGASLQTLYMAAYIL, VVSQVLVSLGVLFLAHCYFTL, LGLFCSIFTISMYLSPLADLA, SFPLTVATFLTSTSWVLYGWV, and LYITVPNFPGIVTSLLRFWLF. Residues 6 to 89 enclose the MtN3/slv 1 domain; that stretch reads LLSGACIVFT…MAAYILYSLE (84 aa). One can recognise a MtN3/slv 2 domain in the interval 124–207; that stretch reads QLGLFCSIFT…FWLFSRYPPD (84 aa).

It belongs to the SWEET sugar transporter family.

Its subcellular location is the golgi apparatus membrane. It localises to the cell membrane. In terms of biological role, mediates sugar transport across membranes. The chain is Sugar transporter SWEET1 (slc50a1) from Xenopus tropicalis (Western clawed frog).